We begin with the raw amino-acid sequence, 303 residues long: DCN1-like protein 3 (303 aa).

Disordered regions lie at residues 1–41 and 62–83; these read MGQC…HLSI and EASQPLAAGGDTKKKEQGTGAE. G2 is lipidated: N-myristoyl glycine. Positions 85–277 constitute a DCUN1 domain; the sequence is SSVQRIEELF…LFDTFVEWEM (193 aa). The disordered stretch occupies residues 284–303; that stretch reads EETKCIPCSGTDDQSTEGQT. Residues 294–303 show a composition bias toward polar residues; sequence TDDQSTEGQT.

May interact (via the DCUN1 domain) with unneddylated cullins.

It is found in the cell membrane. The protein localises to the cytoplasm. It localises to the nucleus. Its subcellular location is the perinuclear region. In terms of biological role, contributes to the neddylation of all cullins by transferring NEDD8 from N-terminally acetylated NEDD8-conjugating E2s enzyme to different cullin C-terminal domain-RBX complexes. At the cell membrane, can promote and as well inhibit cullins neddylation. This chain is DCN1-like protein 3, found in Xenopus tropicalis (Western clawed frog).